Consider the following 213-residue polypeptide: ATP-dependent Clp protease proteolytic subunit (213 aa).

Ser-114 functions as the Nucleophile in the catalytic mechanism. His-139 is an active-site residue.

Belongs to the peptidase S14 family. In terms of assembly, fourteen ClpP subunits assemble into 2 heptameric rings which stack back to back to give a disk-like structure with a central cavity, resembling the structure of eukaryotic proteasomes.

The protein resides in the cytoplasm. The catalysed reaction is Hydrolysis of proteins to small peptides in the presence of ATP and magnesium. alpha-casein is the usual test substrate. In the absence of ATP, only oligopeptides shorter than five residues are hydrolyzed (such as succinyl-Leu-Tyr-|-NHMec, and Leu-Tyr-Leu-|-Tyr-Trp, in which cleavage of the -Tyr-|-Leu- and -Tyr-|-Trp bonds also occurs).. Cleaves peptides in various proteins in a process that requires ATP hydrolysis. Has a chymotrypsin-like activity. Plays a major role in the degradation of misfolded proteins. The sequence is that of ATP-dependent Clp protease proteolytic subunit from Ectopseudomonas mendocina (strain ymp) (Pseudomonas mendocina).